Consider the following 287-residue polypeptide: Co-chaperone protein DjlA (287 aa).

The Periplasmic portion of the chain corresponds to 1–6; it reads MNFIGK. Residues 7 to 30 form a helical membrane-spanning segment; it reads FLGLIIGWKLGGFFGAICGVILGH. Over 31 to 287 the chain is Cytoplasmic; it reads LGDKKLYELG…DLICKTKGWK (257 aa). The J domain occupies 221–287; that stretch reads DAYKVLGVSA…DLICKTKGWK (67 aa).

Homodimer.

Its subcellular location is the cell inner membrane. Regulatory DnaK co-chaperone. Direct interaction between DnaK and DjlA is needed for the induction of the wcaABCDE operon, involved in the synthesis of a colanic acid polysaccharide capsule, possibly through activation of the RcsB/RcsC phosphotransfer signaling pathway. The colanic acid capsule may help the bacterium survive conditions outside the host. The sequence is that of Co-chaperone protein DjlA from Pasteurella multocida (strain Pm70).